We begin with the raw amino-acid sequence, 240 residues long: tRNA pseudouridine synthase A (240 aa).

The active-site Nucleophile is the D50. Substrate is bound at residue Y109.

Belongs to the tRNA pseudouridine synthase TruA family. In terms of assembly, homodimer.

It catalyses the reaction uridine(38/39/40) in tRNA = pseudouridine(38/39/40) in tRNA. Formation of pseudouridine at positions 38, 39 and 40 in the anticodon stem and loop of transfer RNAs. The protein is tRNA pseudouridine synthase A of Campylobacter jejuni (strain RM1221).